The chain runs to 486 residues: Cysteine--tRNA ligase (486 aa).

Residue C30 participates in Zn(2+) binding. The 'HIGH' region motif lies at 32-42 (PTVYDRAHLGN). The Zn(2+) site is built by C221, H246, and E250. Positions 279-283 (KMSKS) match the 'KMSKS' region motif. K282 contacts ATP.

This sequence belongs to the class-I aminoacyl-tRNA synthetase family. As to quaternary structure, monomer. The cofactor is Zn(2+).

It is found in the cytoplasm. It catalyses the reaction tRNA(Cys) + L-cysteine + ATP = L-cysteinyl-tRNA(Cys) + AMP + diphosphate. The polypeptide is Cysteine--tRNA ligase (Cereibacter sphaeroides (strain ATCC 17025 / ATH 2.4.3) (Rhodobacter sphaeroides)).